The following is a 308-amino-acid chain: Glutathione synthetase (308 aa).

An ATP-grasp domain is found at 117 to 300; that stretch reads KLLPLSFPKF…LERDCWDYFE (184 aa). 143-198 is an ATP binding site; it reads YAEYGDIVLKPLYDYGGNGVCRICGRADVGAISSAMVERYEAPLVAQQFIDDISSD. Mg(2+) contacts are provided by E271 and N273.

This sequence belongs to the prokaryotic GSH synthase family. Mg(2+) is required as a cofactor. Requires Mn(2+) as cofactor.

It catalyses the reaction gamma-L-glutamyl-L-cysteine + glycine + ATP = glutathione + ADP + phosphate + H(+). The protein operates within sulfur metabolism; glutathione biosynthesis; glutathione from L-cysteine and L-glutamate: step 2/2. This is Glutathione synthetase from Anaplasma centrale.